Consider the following 511-residue polypeptide: Apolipoprotein N-acyltransferase (511 aa).

Transmembrane regions (helical) follow at residues 7–29, 58–78, 90–110, 125–145, 163–183, and 192–212; these read PGWP…LAPF, GWWY…VSIH, LLML…AWLW, LAFA…LTGF, VPVG…ALLV, and GASL…GLYL. The 241-residue stretch at 230–470 folds into the CN hydrolase domain; it reads IQGNIAQELK…QGILRGEVIP (241 aa). Glu269 (proton acceptor) is an active-site residue. The active site involves Lys330. Catalysis depends on Cys382, which acts as the Nucleophile. A helical membrane pass occupies residues 482 to 502; that stretch reads VWPLAGLAGVLLLWALLGRQL.

Belongs to the CN hydrolase family. Apolipoprotein N-acyltransferase subfamily.

The protein localises to the cell inner membrane. It catalyses the reaction N-terminal S-1,2-diacyl-sn-glyceryl-L-cysteinyl-[lipoprotein] + a glycerophospholipid = N-acyl-S-1,2-diacyl-sn-glyceryl-L-cysteinyl-[lipoprotein] + a 2-acyl-sn-glycero-3-phospholipid + H(+). It participates in protein modification; lipoprotein biosynthesis (N-acyl transfer). Functionally, catalyzes the phospholipid dependent N-acylation of the N-terminal cysteine of apolipoprotein, the last step in lipoprotein maturation. The chain is Apolipoprotein N-acyltransferase from Pseudomonas aeruginosa (strain ATCC 15692 / DSM 22644 / CIP 104116 / JCM 14847 / LMG 12228 / 1C / PRS 101 / PAO1).